Consider the following 186-residue polypeptide: Elongation factor P (186 aa).

The protein belongs to the elongation factor P family.

The protein localises to the cytoplasm. The protein operates within protein biosynthesis; polypeptide chain elongation. Functionally, involved in peptide bond synthesis. Stimulates efficient translation and peptide-bond synthesis on native or reconstituted 70S ribosomes in vitro. Probably functions indirectly by altering the affinity of the ribosome for aminoacyl-tRNA, thus increasing their reactivity as acceptors for peptidyl transferase. This chain is Elongation factor P, found in Mycoplasmopsis synoviae (strain 53) (Mycoplasma synoviae).